Reading from the N-terminus, the 524-residue chain is L-lactate permease (524 aa).

13 consecutive transmembrane segments (helical) span residues 12–34 (LAVSAFVAAIPILLLLLCLTVFK), 38–60 (IQAALLTLLVTFFIAGLVFHLPF), 67–89 (IVQGVVQGLWPIGYIIVMAVWLY), 127–149 (LEGAAGFGVPIAICAVLLVSLGF), 156–178 (MLCLIANGASGAFGAIGIPVGII), 193–215 (SMMTALTLPMINFTIPFLLIWLM), 224–246 (ILPAILVTSSVYTVSQALITIFI), 250–267 (LADIIPSLLTMGLLALFL), 297–319 (WSPFYLLTMFVFLWSLPAFKGLL), 339–361 (IEVGVDFIGATGTAILLAAVTTV), 374–396 (SLLKKVIVDFSIPIMMICAIIGI), 411–433 (EAVATTGAFFPFLSPILGWIGVF), and 505–522 (YSFGLLVFVSVWTYILSL).

It belongs to the lactate permease family.

It is found in the cell membrane. May play a role in L-lactate transport. The sequence is that of L-lactate permease (lctP) from Halalkalibacterium halodurans (strain ATCC BAA-125 / DSM 18197 / FERM 7344 / JCM 9153 / C-125) (Bacillus halodurans).